Here is a 247-residue protein sequence, read N- to C-terminus: Mannose-specific lectin CML-2 (247 aa).

2 residues coordinate a carbohydrate: Asp87 and Gly107. N-linked (GlcNAc...) asparagine glycosylation occurs at Asn119. Mn(2+) contacts are provided by Glu129 and Asp131. Ca(2+) is bound by residues Asp131 and Phe133. The a carbohydrate site is built by Ser138 and Asn139. Ca(2+) is bound by residues Asn139 and Asp142. Mn(2+) is bound by residues Asp142 and His147. 3 residues coordinate a carbohydrate: Gly221, Glu222, and Gln223.

This sequence belongs to the leguminous lectin family. Homodimer; non-covalently linked. Post-translationally, glycosylated.

Its function is as follows. Mannose-specific lectin. Also binds alpha-methyl-D-mannoside, D-glucose, N-acetyl-D-glucosamine and sucrose but not D-galactose, D-arabinose, D-fructose, D-xylose, lactose or glycoproteins fetiun, PSM and ovalbumin. Shows agglutinating activity towards rabbit erythrocytes. This Centrolobium microchaete (Canarywood tree) protein is Mannose-specific lectin CML-2.